The chain runs to 485 residues: Glucose-6-phosphate 1-dehydrogenase (485 aa).

Residues Arg46, 89 to 90 (DI), and Lys144 contribute to the NADP(+) site. His174, Lys178, Glu212, and Asp231 together coordinate substrate. Catalysis depends on His236, which acts as the Proton acceptor. Lys334 contacts substrate.

Belongs to the glucose-6-phosphate dehydrogenase family.

It catalyses the reaction D-glucose 6-phosphate + NADP(+) = 6-phospho-D-glucono-1,5-lactone + NADPH + H(+). It functions in the pathway carbohydrate degradation; pentose phosphate pathway; D-ribulose 5-phosphate from D-glucose 6-phosphate (oxidative stage): step 1/3. Its function is as follows. Catalyzes the oxidation of glucose 6-phosphate to 6-phosphogluconolactone. In Zymomonas mobilis subsp. mobilis (strain ATCC 31821 / ZM4 / CP4), this protein is Glucose-6-phosphate 1-dehydrogenase.